The primary structure comprises 368 residues: Protein-glutamate methylesterase/protein-glutamine glutaminase 1 (368 aa).

The 118-residue stretch at 4–121 (KVLVVDDSGF…SRNPDKVRQL (118 aa)) folds into the Response regulatory domain. Aspartate 55 carries the post-translational modification 4-aspartylphosphate. The interval 138–176 (SLPPLPSATSSSHAPASSSSVGASARVGAGASPAPASTS) is disordered. Over residues 144–176 (SATSSSHAPASSSSVGASARVGAGASPAPASTS) the composition is skewed to low complexity. Positions 172 to 368 (PASTSAAPKR…IGRHLVEACQ (197 aa)) constitute a CheB-type methylesterase domain. Active-site residues include serine 192, histidine 219, and aspartate 312.

Belongs to the CheB family. Phosphorylated by CheA. Phosphorylation of the N-terminal regulatory domain activates the methylesterase activity.

Its subcellular location is the cytoplasm. The enzyme catalyses [protein]-L-glutamate 5-O-methyl ester + H2O = L-glutamyl-[protein] + methanol + H(+). It catalyses the reaction L-glutaminyl-[protein] + H2O = L-glutamyl-[protein] + NH4(+). In terms of biological role, involved in chemotaxis. Part of a chemotaxis signal transduction system that modulates chemotaxis in response to various stimuli. Catalyzes the demethylation of specific methylglutamate residues introduced into the chemoreceptors (methyl-accepting chemotaxis proteins or MCP) by CheR. Also mediates the irreversible deamidation of specific glutamine residues to glutamic acid. This is Protein-glutamate methylesterase/protein-glutamine glutaminase 1 from Pseudomonas aeruginosa (strain ATCC 15692 / DSM 22644 / CIP 104116 / JCM 14847 / LMG 12228 / 1C / PRS 101 / PAO1).